A 180-amino-acid polypeptide reads, in one-letter code: ATP-dependent protease subunit HslV (180 aa).

Residue threonine 5 is part of the active site. 3 residues coordinate Na(+): glycine 165, cysteine 168, and threonine 171.

The protein belongs to the peptidase T1B family. HslV subfamily. A double ring-shaped homohexamer of HslV is capped on each side by a ring-shaped HslU homohexamer. The assembly of the HslU/HslV complex is dependent on binding of ATP.

It localises to the cytoplasm. The catalysed reaction is ATP-dependent cleavage of peptide bonds with broad specificity.. With respect to regulation, allosterically activated by HslU binding. Its function is as follows. Protease subunit of a proteasome-like degradation complex believed to be a general protein degrading machinery. This chain is ATP-dependent protease subunit HslV, found in Helicobacter pylori (strain HPAG1).